Consider the following 232-residue polypeptide: TIR domain-containing adapter molecule 2 (232 aa).

Residues 1 to 39 (MGVGKSKLDKCPLSWHKKDSVDADQDGHESDSKNSEEAC) show a composition bias toward basic and acidic residues. The segment at 1–70 (MGVGKSKLDK…EAKGAGPEEQ (70 aa)) is disordered. The N-myristoyl glycine moiety is linked to residue Gly2. Residues 74–226 (EFLKFVILHA…SIWKETRSVS (153 aa)) enclose the TIR domain. Phosphotyrosine is present on Tyr164.

In terms of assembly, homodimer. Interacts with TLR4, TICAM1, IRF3 and IRF7 in response to LPS. Interacts with IL1R1, IL1RAP, IRAK2, IRAK3 and TRAF6. Interacts with protein kinase-inactive mutants of IRAK1 and IRAK4. Isoform 1 interacts with isoform 2; the interaction occurs in late endosomes and disrupts the interaction between isoform 1 and TICAM1. Interacts with MYD88; the interaction decreases after IL-18 stimulation in a time-dependent manner. Interacts with IL18R1 and IL18RAP. Interacts with TLR2. Interacts with RAB11FIP2. In terms of processing, myristoylated. Required for membrane association which is critical for its ability to initiate efficient signaling. Post-translationally, phosphorylated by PRKCE in response to LPS. Phosphorylation is essential for its function. It is depleted from the membrane upon phosphorylation. Tyrosine phosphorylation is inhibited by phosphatase PTPN4.

Its subcellular location is the cytoplasm. It is found in the golgi apparatus. It localises to the cell membrane. The protein resides in the early endosome. The protein localises to the late endosome. Its subcellular location is the endoplasmic reticulum. It is found in the cell projection. It localises to the phagocytic cup. Functionally, functions as a sorting adapter in different signaling pathways to facilitate downstream signaling leading to type I interferon induction. In TLR4 signaling, physically bridges TLR4 and TICAM1 and functionally transmits signal to TICAM1 in early endosomes after endocytosis of TLR4. In TLR2 signaling, physically bridges TLR2 and MYD88 and is required for the TLR2-dependent movement of MYD88 to endosomes following ligand engagement. Involved in IL-18 signaling and is proposed to function as a sorting adapter for MYD88 in IL-18 signaling during adaptive immune response. Forms a complex with RAB11FIP2 that is recruited to the phagosomes to promote the activation of the actin-regulatory GTPases RAC1 and CDC42 and subsequent phagocytosis of Gram-negative bacteria. The sequence is that of TIR domain-containing adapter molecule 2 (Ticam2) from Mus musculus (Mouse).